We begin with the raw amino-acid sequence, 633 residues long: Transcriptional repressor p66-alpha (633 aa).

Basic and acidic residues predominate over residues Met1–Asp18. Disordered stretches follow at residues Met1–Gly59 and Arg73–Gly119. Residues Thr20 and Thr49 each carry the phosphothreonine modification. Residues Arg86–Pro99 show a composition bias toward basic and acidic residues. A Glycyl lysine isopeptide (Lys-Gly) (interchain with G-Cter in SUMO2) cross-link involves residue Lys93. Ser100, Ser107, Ser113, Ser114, and Ser137 each carry phosphoserine. A compositionally biased stretch (polar residues) spans Asp108 to Gly119. The stretch at Glu139–Ala174 forms a coiled coil. Residues Met144–Lys178 are CR1; interaction with HDAC1, HDAC2, MBD2 and MTA2. Residues Lys172–Thr188 show a composition bias toward polar residues. The tract at residues Lys172–Ala238 is disordered. Residue Lys178 forms a Glycyl lysine isopeptide (Lys-Gly) (interchain with G-Cter in SUMO2) linkage. The interaction with ZMYND8 stretch occupies residues Gly181–Ala295. Thr189 bears the Phosphothreonine mark. Positions Gly196 to Ala212 are enriched in polar residues. Lys204 participates in a covalent cross-link: Glycyl lysine isopeptide (Lys-Gly) (interchain with G-Cter in SUMO2). The residue at position 225 (Arg225) is an Omega-N-methylarginine. Residues Gln228–Ala238 show a composition bias toward polar residues. A Glycyl lysine isopeptide (Lys-Gly) (interchain with G-Cter in SUMO2) cross-link involves residue Lys233. Arg249, Arg258, and Arg273 each carry omega-N-methylarginine. Ser275 carries the phosphoserine modification. Arg285 is subject to Omega-N-methylarginine. Phosphoserine occurs at positions 340 and 343. Residues Ser340–Gly480 form a CR2; histone tail-binding and interaction with CHD4 and CDK2AP1 region. Residues Ser411–Lys464 form a GATA-type zinc finger. Residues Lys464 and Lys487 each participate in a glycyl lysine isopeptide (Lys-Gly) (interchain with G-Cter in SUMO2) cross-link. Residue Ser512 is modified to Phosphoserine. Position 539 is an asymmetric dimethylarginine; alternate (Arg539). Arg539 carries the omega-N-methylarginine; alternate modification. Phosphoserine occurs at positions 546 and 548. Lys550 is covalently cross-linked (Glycyl lysine isopeptide (Lys-Gly) (interchain with G-Cter in SUMO2)). Ser556 bears the Phosphoserine mark. The tract at residues Val561–Lys585 is disordered. Lys585 participates in a covalent cross-link: Glycyl lysine isopeptide (Lys-Gly) (interchain with G-Cter in SUMO2). Ser598 carries the phosphoserine modification. Lys605 is covalently cross-linked (Glycyl lysine isopeptide (Lys-Gly) (interchain with G-Cter in SUMO2)).

Homooligomer. Component of the nucleosome remodeling and deacetylase (NuRD) repressor complex, composed of core proteins MTA1, MTA2, MTA3, RBBP4, RBBP7, HDAC1, HDAC2, MBD2, MBD3, and peripherally associated proteins CDK2AP1, CDK2AP2, GATAD2A, GATAD2B, CHD3, CHD4 and CHD5. The exact stoichiometry of the NuRD complex is unknown, and some subunits such as MBD2 and MBD3, GATAD2A and GATAD2B, and CHD3, CHD4 and CHD5 define mutually exclusive NuRD complexes. Component of the MeCP1 histone deacetylase complex. Interacts with CDK2AP1. Interacts with CHD4. Interacts with ERCC6. Interacts with HDAC1. Interacts with HDAC2. Interacts with MBD2; this interaction is required for the enhancement of MBD2-mediated repression and for targeting to the chromatin. Interacts with MBD3. Interacts with MTA2. Interacts with ZMYND8. Interacts with histone tails, including that of histones H2A, H2B, H3 and H4, the interaction is reduced by histone acetylation. In terms of tissue distribution, ubiquitous, both in fetal and adult tissues.

It localises to the nucleus speckle. The protein localises to the nucleus. It is found in the chromosome. In terms of biological role, transcriptional repressor. Acts as a component of the histone deacetylase NuRD complex which participates in the remodeling of chromatin. Enhances MBD2-mediated repression. Efficient repression requires the presence of GATAD2B. The chain is Transcriptional repressor p66-alpha (GATAD2A) from Homo sapiens (Human).